Consider the following 3907-residue polypeptide: Cyclo-acetoacetyl-L-tryptophan synthase (3907 aa).

The Ketosynthase family 3 (KS3) domain occupies 2–436 (KTPIAVVGTA…GTNAHAIIES (435 aa)). Residues C176, H313, and H356 each act as for beta-ketoacyl synthase activity in the active site. A malonyl-CoA:ACP transacylase (MAT) domain region spans residues 555 to 870 (IFTGQGAQWA…SLLRRGQNDL (316 aa)). The tract at residues 937 to 1074 (HPLLGRRSAD…ARLTLHLGDA (138 aa)) is N-terminal hotdog fold. Residues 937–1236 (HPLLGRRSAD…GLVMKSVPQP (300 aa)) are dehydratase (DH) domain. The region spanning 937-1239 (HPLLGRRSAD…MKSVPQPDTS (303 aa)) is the PKS/mFAS DH domain. The segment at 1092–1239 (LAPVDVADLY…MKSVPQPDTS (148 aa)) is C-terminal hotdog fold. The interval 1386 to 1573 (AAMFSQLSKD…FSGIDHIFHD (188 aa)) is methyltransferase (MT) domain. Residues 2064-2238 (GTYFMIDMAT…VGSVMALGMV (175 aa)) are ketoreductase (KR)domain. The tract at residues 2324–2352 (TKEGQYAEQEDSPSLLVPDEQLQESGPGR) is disordered. The Carrier 1 domain occupies 2356-2430 (DDLLARLSGK…LCEKAVPKPN (75 aa)). S2390 carries the O-(pantetheine 4'-phosphoryl)serine modification. Residues 2504–2926 (MSPHQSQIWF…SSNPLISVQS (423 aa)) form a condensation region. Residues 2959–3359 (FQDMVDQYGD…GSLILLGRMD (401 aa)) are adenylation. The 76-residue stretch at 3474–3549 (KRLTLGEGEL…QMALKVDARK (76 aa)) folds into the Carrier 2 domain. The residue at position 3509 (S3509) is an O-(pantetheine 4'-phosphoryl)serine. Residues 3594-3813 (LTGSTSFLGR…DFQKVEIIAE (220 aa)) form a reductase (RED) domain region.

It in the C-terminal section; belongs to the NRP synthetase family.

The enzyme catalyses L-tryptophan + malonyl-CoA + acetyl-CoA = cyclo-acetoacetyl-L-tryptophan + CO2 + 2 CoA + H2O. It participates in secondary metabolite biosynthesis. Its function is as follows. Hybrid PKS-NRPS synthetase; part of the gene cluster that mediates the biosynthesis of the fungal neurotoxin cyclopiazonic acid (CPA), a nanomolar inhibitor of Ca(2+)-ATPase with a unique pentacyclic indole tetramic acid scaffold. The hybrid two module polyketide synthase-nonribosomal peptide synthetase (PKS-NRPS) cpaS incorporates acetyl-CoA, malonyl-CoA, and tryptophan (Trp) and utilizes a C-terminal redox-incompetent reductase domain to make and release the tryptophan tetramic acid, cyclo-acetoacetyl-L-tryptophan (c-AATrp), as the first intermediate in the pathway. CpaS catalyzes a Dieckmann-type cyclization on the N-acetoacetyl-Trp intermediate bound in thioester linkage to the phosphopantetheinyl arm of the T domain to form and release c-AATrp. CpaD then regiospecifically dimethylallylates c-AATrp to form beta-cyclopiazonic acid. CpaD discriminates against free Trp but accepts tryptophan-containing thiohydantoins, diketopiperazines, and linear peptides as substrates for C4-prenylation and also acts as regiospecific O-dimethylallyltransferase (DMAT) on a tyrosine-derived tetramic acid. The beta-cyclopiazonate dehydrogenase cpaO then carries out the dehydrogenation of beta-CPA to yield an unstable enimine product, which is captured by intramolecular cyclization to create the pentacyclic fused scaffold of alpha-cyclopiazonate. Finally, the cytochrome P450 monooxygenase cpaH mediates the conversion of CPA into the less toxic 2-oxocyclopiazonic acid, the end product of the CPA pathway in A.oryza. In Aspergillus oryzae (Yellow koji mold), this protein is Cyclo-acetoacetyl-L-tryptophan synthase.